The following is a 277-amino-acid chain: Large ribosomal subunit protein uL2 (277 aa).

Disordered regions lie at residues 32-58 (KSLTKGKKLKSGRDSSGRISIRRRGGG) and 225-277 (VAMN…RRNK). Basic residues predominate over residues 258-277 (YKTRKKKRYSDKFIIKRRNK).

It belongs to the universal ribosomal protein uL2 family. Part of the 50S ribosomal subunit. Forms a bridge to the 30S subunit in the 70S ribosome.

Its function is as follows. One of the primary rRNA binding proteins. Required for association of the 30S and 50S subunits to form the 70S ribosome, for tRNA binding and peptide bond formation. It has been suggested to have peptidyltransferase activity; this is somewhat controversial. Makes several contacts with the 16S rRNA in the 70S ribosome. In Borrelia garinii subsp. bavariensis (strain ATCC BAA-2496 / DSM 23469 / PBi) (Borreliella bavariensis), this protein is Large ribosomal subunit protein uL2.